We begin with the raw amino-acid sequence, 185 residues long: MINNIRQDAEVRMEKCLETFKNNISKLRTGRANPNLLDNIKVDYYGSIMPLRQLANIIVEDTRTLVITLFDQSIIKRVEKAIIISDLGLTPDLSGTIIRVQLPSLTEERRRNLIKIVRNEAEQGKISVRNIRRDANDHIKILLKNKAISIDEERRSQSEIQKITEAWIRRLDQILSEKERELIDF.

The protein belongs to the RRF family.

Its subcellular location is the cytoplasm. Responsible for the release of ribosomes from messenger RNA at the termination of protein biosynthesis. May increase the efficiency of translation by recycling ribosomes from one round of translation to another. The sequence is that of Ribosome-recycling factor from Baumannia cicadellinicola subsp. Homalodisca coagulata.